The following is a 63-amino-acid chain: Serine protease inhibitor 3 (63 aa).

A signal peptide spans 1 to 23 (MAKLLAVFLVLLIAALVCEQALA). 3 cysteine pairs are disulfide-bonded: cysteine 24/cysteine 39, cysteine 34/cysteine 52, and cysteine 37/cysteine 47. Positions 24–55 (CTPGSRKYDGCNWCTCSSGGAWICTLKYCPPS) constitute a Pacifastin domain.

It belongs to the protease inhibitor I19 family. As to expression, expressed in hemolymph, ovaries, testes and fat body of adults but are absent in the gut. Also present in larval hemolymph and fat body.

It localises to the secreted. Its function is as follows. In vitro, active against alpha-chymotrypsin. The polypeptide is Serine protease inhibitor 3 (Schistocerca gregaria (Desert locust)).